Reading from the N-terminus, the 131-residue chain is ATP synthase epsilon chain, chloroplastic (131 aa).

This sequence belongs to the ATPase epsilon chain family. F-type ATPases have 2 components, CF(1) - the catalytic core - and CF(0) - the membrane proton channel. CF(1) has five subunits: alpha(3), beta(3), gamma(1), delta(1), epsilon(1). CF(0) has three main subunits: a, b and c.

The protein resides in the plastid. It is found in the chloroplast thylakoid membrane. Functionally, produces ATP from ADP in the presence of a proton gradient across the membrane. This chain is ATP synthase epsilon chain, chloroplastic, found in Guillardia theta (Cryptophyte).